Here is a 75-residue protein sequence, read N- to C-terminus: Conotoxin Im23.5 (75 aa).

The N-terminal stretch at 1–23 is a signal peptide; it reads MKFFTCLLLLLVVLTVVFDNVDA. 3 disulfides stabilise this stretch: cysteine 24–cysteine 28, cysteine 37–cysteine 40, and cysteine 41–cysteine 43. Residues 24 to 50 constitute a propeptide that is removed on maturation; sequence CDRSCTGVMGHPSCATCCACFTSAGKR.

Expressed by the venom duct.

The protein localises to the secreted. Probable neurotoxin. This is Conotoxin Im23.5 from Conus imperialis (Imperial cone).